A 1317-amino-acid polypeptide reads, in one-letter code: DNA-directed RNA polymerase subunit beta' (1317 aa).

Residues C60, C62, C75, and C78 each contribute to the Zn(2+) site. The disordered stretch occupies residues E183–R209. The Mg(2+) site is built by D535, D537, and D539. C890, C967, C974, and C977 together coordinate Zn(2+).

It belongs to the RNA polymerase beta' chain family. In terms of assembly, the RNAP catalytic core consists of 2 alpha, 1 beta, 1 beta' and 1 omega subunit. When a sigma factor is associated with the core the holoenzyme is formed, which can initiate transcription. Mg(2+) is required as a cofactor. It depends on Zn(2+) as a cofactor.

It catalyses the reaction RNA(n) + a ribonucleoside 5'-triphosphate = RNA(n+1) + diphosphate. In terms of biological role, DNA-dependent RNA polymerase catalyzes the transcription of DNA into RNA using the four ribonucleoside triphosphates as substrates. The sequence is that of DNA-directed RNA polymerase subunit beta' from Mycolicibacterium vanbaalenii (strain DSM 7251 / JCM 13017 / BCRC 16820 / KCTC 9966 / NRRL B-24157 / PYR-1) (Mycobacterium vanbaalenii).